The sequence spans 410 residues: E3 ubiquitin-protein ligase ICP0 (410 aa).

The RING-type zinc-finger motif lies at 46–85 (CPICLDVAATEAQTLPCMHKFCLDCIQRWTLTSTACPLCN). The segment at 243 to 410 (TSESEAHSDS…IFIDLTQDDD (168 aa)) is disordered. Residues 287 to 315 (APRRSPRRARRAAVLRREQRRTRCLRRGR) are compositionally biased toward basic residues. Low complexity-rich tracts occupy residues 329–340 (SSGEGSSAQHGA) and 348–399 (GSAN…PRSA).

Post-translationally, auto-ubiquitinated.

The catalysed reaction is S-ubiquitinyl-[E2 ubiquitin-conjugating enzyme]-L-cysteine + [acceptor protein]-L-lysine = [E2 ubiquitin-conjugating enzyme]-L-cysteine + N(6)-ubiquitinyl-[acceptor protein]-L-lysine.. Its function is as follows. Evades nuclear antiviral defenses triggered by dsDNA viruses. Acts during the initial stages of lytic infection and the reactivation of latent viral genome. Prevents the antiviral effect of nuclear bodies by degrading host PML and SP100. This is E3 ubiquitin-protein ligase ICP0 (EP0) from Sus scrofa (Pig).